Here is a 147-residue protein sequence, read N- to C-terminus: D-aminoacyl-tRNA deacylase (147 aa).

The Gly-cisPro motif, important for rejection of L-amino acids motif lies at 136–137 (GP).

It belongs to the DTD family. Homodimer.

It is found in the cytoplasm. It catalyses the reaction glycyl-tRNA(Ala) + H2O = tRNA(Ala) + glycine + H(+). It carries out the reaction a D-aminoacyl-tRNA + H2O = a tRNA + a D-alpha-amino acid + H(+). An aminoacyl-tRNA editing enzyme that deacylates mischarged D-aminoacyl-tRNAs. Also deacylates mischarged glycyl-tRNA(Ala), protecting cells against glycine mischarging by AlaRS. Acts via tRNA-based rather than protein-based catalysis; rejects L-amino acids rather than detecting D-amino acids in the active site. By recycling D-aminoacyl-tRNA to D-amino acids and free tRNA molecules, this enzyme counteracts the toxicity associated with the formation of D-aminoacyl-tRNA entities in vivo and helps enforce protein L-homochirality. This chain is D-aminoacyl-tRNA deacylase, found in Streptococcus agalactiae serotype Ia (strain ATCC 27591 / A909 / CDC SS700).